Reading from the N-terminus, the 217-residue chain is Dual specificity phosphatase 29 (217 aa).

The Tyrosine-protein phosphatase domain maps to 46-194; it reads HVNEVWPNLY…LRELDIKLAL (149 aa). 138-145 contacts substrate; the sequence is HCAMGRSR. Catalysis depends on cysteine 139, which acts as the Phosphocysteine intermediate.

The protein belongs to the protein-tyrosine phosphatase family. Non-receptor class dual specificity subfamily.

It is found in the cytoplasm. The protein localises to the nucleus. The enzyme catalyses O-phospho-L-tyrosyl-[protein] + H2O = L-tyrosyl-[protein] + phosphate. It carries out the reaction O-phospho-L-seryl-[protein] + H2O = L-seryl-[protein] + phosphate. It catalyses the reaction O-phospho-L-threonyl-[protein] + H2O = L-threonyl-[protein] + phosphate. Dual specificity phosphatase able to dephosphorylate phosphotyrosine, phosphoserine and phosphothreonine residues within the same substrate, with a preference for phosphotyrosine as a substrate. Involved in the modulation of AMPK and MAPK1/2 signaling pathways. This is Dual specificity phosphatase 29 (DUSP29) from Anolis carolinensis (Green anole).